A 62-amino-acid chain; its full sequence is Conotoxin Sr5.6 (62 aa).

Positions 1 to 22 (MRCLPVFVILLLLIASASSVDA) are cleaved as a signal peptide. Residues 23–44 (QLKTKDDVPLTSVHDNAKGTQH) constitute a propeptide that is removed on maturation. Residue proline 61 is modified to Proline amide.

Belongs to the conotoxin T superfamily. Contains 2 disulfide bonds that can be either 'C1-C3, C2-C4' or 'C1-C4, C2-C3', since these disulfide connectivities have been observed for conotoxins with cysteine framework V (for examples, see AC P0DQQ7 and AC P81755). Expressed by the venom duct.

The protein localises to the secreted. This is Conotoxin Sr5.6 from Conus spurius (Alphabet cone).